The following is a 435-amino-acid chain: Ribulose bisphosphate carboxylase large chain (435 aa).

K5 is modified (N6,N6,N6-trimethyllysine). Residues N114 and T164 each coordinate substrate. K166 acts as the Proton acceptor in catalysis. A substrate-binding site is contributed by K168. Mg(2+) contacts are provided by K192, D194, and E195. An N6-carboxylysine modification is found at K192. H285 functions as the Proton acceptor in the catalytic mechanism. Residues R286, H318, and S370 each coordinate substrate.

It belongs to the RuBisCO large chain family. Type I subfamily. Heterohexadecamer of 8 large chains and 8 small chains; disulfide-linked. The disulfide link is formed within the large subunit homodimers. Mg(2+) is required as a cofactor. Post-translationally, the disulfide bond which can form in the large chain dimeric partners within the hexadecamer appears to be associated with oxidative stress and protein turnover.

The protein resides in the plastid. It is found in the chloroplast. It carries out the reaction 2 (2R)-3-phosphoglycerate + 2 H(+) = D-ribulose 1,5-bisphosphate + CO2 + H2O. It catalyses the reaction D-ribulose 1,5-bisphosphate + O2 = 2-phosphoglycolate + (2R)-3-phosphoglycerate + 2 H(+). RuBisCO catalyzes two reactions: the carboxylation of D-ribulose 1,5-bisphosphate, the primary event in carbon dioxide fixation, as well as the oxidative fragmentation of the pentose substrate in the photorespiration process. Both reactions occur simultaneously and in competition at the same active site. The sequence is that of Ribulose bisphosphate carboxylase large chain from Drosera burmannii (Burmese sundew).